Reading from the N-terminus, the 190-residue chain is uncharacterized protein (190 aa).

This is an uncharacterized protein from Acidianus hospitalis (AFV-1).